Here is a 644-residue protein sequence, read N- to C-terminus: MFQDNPLLAQLKQQLHSQTPRAEGVVKATEKGFGFLEVDAQKSYFIPPPQMKKVMHGDRIVAVIHTEKERESAEPEELIEPFLTRFVGKVQGKNDRLSIVPDHPLLKDAIPCRAARGVQHEFKEGDWAVAEMRRHPLKGDRSFYADLTQYITFADDHFVPWWVTLARHNLEKEAPNGVATEMLDEGLERQDLTALNFVTIDSASTEDMDDALYAEELADGRLQLTVAIADPTAWIAEGSKLDNAAKIRAFTNYLPGFNIPMLPRELSDDLCSLRANEVRPALACRMIISADGTIDDDIAFFAATIESKAKLAYDNVSDWLENNGTWQPDNEGIAQQIRLLHRICLSRSEWRHHHALVFKDRPDYRFVLGEKGEVLDIVAEPRRIANRIVEESMIAANLCAARVLRDKLGFGIYNVHTGFDPANADALAALLKTHGLHVDAEEVLTLEGFCKLRRELDAQPSGFLDSRIRRFQSFAEISTEPGPHFGLGLEAYATWTSPIRKYGDMINHRLLKAVIKGEAIARPQEDITQQMAERRRLNRMAERDVGDWLYARFLNDKAGTNTRFAAEIIDVSRGGMRVRLVDNGAIAFIPAPFLHAVRDELVCSQENGTVQIKGETVYKVTDVIDVTIAEVRMETRSIIARPAA.

The RNB domain occupies 189–516 (RQDLTALNFV…NHRLLKAVIK (328 aa)). The S1 motif domain occupies 561 to 643 (NTRFAAEIID…ETRSIIARPA (83 aa)).

Belongs to the RNR ribonuclease family. RNase II subfamily.

Its subcellular location is the cytoplasm. It catalyses the reaction Exonucleolytic cleavage in the 3'- to 5'-direction to yield nucleoside 5'-phosphates.. Functionally, involved in mRNA degradation. Hydrolyzes single-stranded polyribonucleotides processively in the 3' to 5' direction. The polypeptide is Exoribonuclease 2 (Salmonella dublin (strain CT_02021853)).